The following is a 602-amino-acid chain: Sodium- and chloride-dependent GABA transporter 2 (602 aa).

Residues 1 to 40 are Cytoplasmic-facing; sequence MENRASGTTSNGETKPVCPAMEKVEEDGTLEREHWNNKME. Helical transmembrane passes span 41 to 61, 68 to 88, and 121 to 141; these read FVLSVAGEIIGLGNVWRFPYL, GAFFIPYLIFLFTCGIPVFFL, and IVSLLNVYYIVVLAWALFYLF. Residues 142-206 lie on the Extracellular side of the membrane; the sequence is SSFTTDLPWG…GIQHLGSLRW (65 aa). An intrachain disulfide couples cysteine 153 to cysteine 162. Residues asparagine 169, asparagine 173, and asparagine 178 are each glycosylated (N-linked (GlcNAc...) asparagine). 2 consecutive transmembrane segments (helical) span residues 207 to 227 and 233 to 253; these read ELVLCLLLAWIICYFCIWKGV and VVYFTATFPYLMLVVLLIRGV. Asparagine 269 carries an N-linked (GlcNAc...) asparagine glycan. A run of 7 helical transmembrane segments spans residues 282–302, 319–339, 366–386, 418–438, 453–473, 490–510, and 528–548; these read AGTQIFFSFAICLGCLTALGS, ILNSSTSFMAGFAIFSILGFM, VVMLPFSPLWACCFFFMVVLL, VLILIVSVISFFIGLIMLTEG, GMCLLFVAIFESLCVAWVYGA, PLIKYCWLFFTPAVCLATFLF, and WWGDALGWLLALSSMICIPAW. Residues 549–602 lie on the Cytoplasmic side of the membrane; that stretch reads SIYKLRTLKGPLRERLRQLVCPAEDLPQKNQPEPTAPATPMTSLLRLTELESNC. Threonine 587 is subject to Phosphothreonine. Position 591 is a phosphoserine (serine 591).

Belongs to the sodium:neurotransmitter symporter (SNF) (TC 2.A.22) family. SLC6A13 subfamily. In terms of tissue distribution, expressed at high levels in liver, followed by kidney and leptomeninges, and very low levels in the cerebellum (at protein level). In the brain, detected in some blood vessels (at protein level). In the kidney, expressed in the cortex, including parts of the proximal tubules, but not in the medulla (at protein level). In the liver, highest expression in periportal hepatocytes, with highest density at the vascular side (at protein level). Also detected at low levels in other organs, including skeletal muscle.

It is found in the cell membrane. Its subcellular location is the basolateral cell membrane. The enzyme catalyses 4-aminobutanoate(out) + chloride(out) + 2 Na(+)(out) = 4-aminobutanoate(in) + chloride(in) + 2 Na(+)(in). It catalyses the reaction taurine(out) + chloride(out) + 2 Na(+)(out) = taurine(in) + chloride(in) + 2 Na(+)(in). The catalysed reaction is beta-alanine(out) + chloride(out) + 2 Na(+)(out) = beta-alanine(in) + chloride(in) + 2 Na(+)(in). It carries out the reaction hypotaurine(out) + chloride(out) + 2 Na(+)(out) = hypotaurine(in) + chloride(in) + 2 Na(+)(in). Gamma-aminobutyric acid (GABA) transport is inhibited by beta-alanine, taurine, hypotaurine, beta-guanidinopropionic acid, 2,3-diaminopropionic acid, guvacine and nipecotic acid. Beta-alanine transport is inhibited by GABA. Taurine transport is inhibited by GABA, beta-alanine, SNAP-5114, nigericin, nipecotic acid and ouabain. Mediates sodium- and chloride-dependent transport of gamma-aminobutyric acid (GABA). Can also mediate transport of beta-alanine, taurine and hypotaurine and is the major taurine transporter in hepatocytes. This chain is Sodium- and chloride-dependent GABA transporter 2 (Slc6a13), found in Mus musculus (Mouse).